The sequence spans 156 residues: S-ribosylhomocysteine lyase (156 aa).

His-54, His-58, and Cys-123 together coordinate Fe cation.

The protein belongs to the LuxS family. As to quaternary structure, homodimer. Fe cation is required as a cofactor.

The catalysed reaction is S-(5-deoxy-D-ribos-5-yl)-L-homocysteine = (S)-4,5-dihydroxypentane-2,3-dione + L-homocysteine. Functionally, involved in the synthesis of autoinducer 2 (AI-2) which is secreted by bacteria and is used to communicate both the cell density and the metabolic potential of the environment. The regulation of gene expression in response to changes in cell density is called quorum sensing. Catalyzes the transformation of S-ribosylhomocysteine (RHC) to homocysteine (HC) and 4,5-dihydroxy-2,3-pentadione (DPD). The protein is S-ribosylhomocysteine lyase of Ligilactobacillus salivarius (strain UCC118) (Lactobacillus salivarius).